We begin with the raw amino-acid sequence, 275 residues long: Large ribosomal subunit protein uL2 (275 aa).

The span at 28 to 38 shows a compositional bias: basic and acidic residues; that stretch reads EPYAPLLDKKS. Disordered stretches follow at residues 28-55 and 224-258; these read EPYA…RHVG and AMNP…GYKT.

The protein belongs to the universal ribosomal protein uL2 family. In terms of assembly, part of the 50S ribosomal subunit. Forms a bridge to the 30S subunit in the 70S ribosome.

In terms of biological role, one of the primary rRNA binding proteins. Required for association of the 30S and 50S subunits to form the 70S ribosome, for tRNA binding and peptide bond formation. It has been suggested to have peptidyltransferase activity; this is somewhat controversial. Makes several contacts with the 16S rRNA in the 70S ribosome. The protein is Large ribosomal subunit protein uL2 of Cellvibrio japonicus (strain Ueda107) (Pseudomonas fluorescens subsp. cellulosa).